The sequence spans 459 residues: Glycosyl hydrolase family 109 protein (459 aa).

The segment at residues 1–31 (MHNIHRRNFLKAAGAATAGLVTANIALNAYA) is a signal peptide (tat-type signal). NAD(+)-binding positions include 64 to 65 (ER), Asp-86, 135 to 138 (WEWH), 155 to 156 (EV), and Asn-184. Substrate is bound by residues Tyr-213, Arg-232, 244-247 (YPTH), and Tyr-326. Tyr-244 serves as a coordination point for NAD(+).

The protein belongs to the Gfo/Idh/MocA family. Glycosyl hydrolase 109 subfamily. NAD(+) serves as cofactor. In terms of processing, predicted to be exported by the Tat system. The position of the signal peptide cleavage has not been experimentally proven.

In terms of biological role, glycosidase. This chain is Glycosyl hydrolase family 109 protein, found in Shewanella baltica (strain OS195).